We begin with the raw amino-acid sequence, 615 residues long: MAVYVGMLRLGRLCAGSSGVLGARAALSRSWQEARLQGVRFLSSREVDRMVSTPIGGLSYVQGCTKKHLNSKTVGQCLETTAQRVPEREALVVLHEDVRLTFAQLKEEVDKAASGLLSIGLCKGDRLGMWGPNSYAWVLMQLATAQAGIILVSVNPAYQAMELEYVLKKVGCKALVFPKQFKTQQYYNVLKQICPEVENAQPGALKSQRLPDLTTVISVDAPLPGTLLLDEVVAAGSTRQHLDQLQYNQQFLSCHDPINIQFTSGTTGSPKGATLSHYNIVNNSNILGERLKLHEKTPEQLRMILPNPLYHCLGSVAGTMMCLMYGATLILASPIFNGKKALEAISRERGTFLYGTPTMFVDILNQPDFSSYDISTMCGGVIAGSPAPPELIRAIINKINMKDLVVAYGTTENSPVTFAHFPEDTVEQKAESVGRIMPHTEARIMNMEAGTLAKLNTPGELCIRGYCVMLGYWGEPQKTEEAVDQDKWYWTGDVATMNEQGFCKIVGRSKDMIIRGGENIYPAELEDFFHTHPKVQEVQVVGVKDDRMGEEICACIRLKDGEETTVEEIKAFCKGKISHFKIPKYIVFVTNYPLTISGKIQKFKLREQMERHLNL.

A mitochondrion-targeting transit peptide spans Met-1 to Phe-41. Lys-179 is subject to N6-acetyllysine. Lys-182 is modified (N6-acetyllysine; alternate). An N6-succinyllysine; alternate modification is found at Lys-182. Residue Thr-263–Lys-271 participates in ATP binding. An N6-acetyllysine mark is found at Lys-340 and Lys-398. Lys-478 bears the N6-succinyllysine mark. Residues Asp-493 and Arg-508 each contribute to the ATP site. Residue Lys-510 is modified to N6-acetyllysine. N6-acetyllysine; alternate is present on residues Lys-544 and Lys-570. An N6-succinyllysine; alternate mark is found at Lys-544 and Lys-570. Lys-599 lines the ATP pocket. At Lys-599 the chain carries N6-succinyllysine.

This sequence belongs to the ATP-dependent AMP-binding enzyme family.

The protein localises to the mitochondrion. The enzyme catalyses a medium-chain fatty acid + ATP + CoA = a medium-chain fatty acyl-CoA + AMP + diphosphate. The catalysed reaction is octanoate + ATP + CoA = octanoyl-CoA + AMP + diphosphate. Functionally, acyl-CoA synthases catalyze the initial reaction in fatty acid metabolism, by forming a thioester with CoA. Has some preference toward medium-chain substrates. Plays a role in adipocyte differentiation. The sequence is that of Medium-chain acyl-CoA ligase ACSF2, mitochondrial from Homo sapiens (Human).